Consider the following 376-residue polypeptide: DNA-directed RNA polymerase subunit alpha (376 aa).

The tract at residues 1–259 is alpha N-terminal domain (alpha-NTD); the sequence is MSDNSQNLLY…KHFSIFEKMD (259 aa). Residues 276 to 376 form an alpha C-terminal domain (alpha-CTD) region; the sequence is KDDILHKLVL…EKIRSKNVKG (101 aa).

The protein belongs to the RNA polymerase alpha chain family. Homodimer. The RNAP catalytic core consists of 2 alpha, 1 beta, 1 beta' and 1 omega subunit. When a sigma factor is associated with the core the holoenzyme is formed, which can initiate transcription.

The enzyme catalyses RNA(n) + a ribonucleoside 5'-triphosphate = RNA(n+1) + diphosphate. In terms of biological role, DNA-dependent RNA polymerase catalyzes the transcription of DNA into RNA using the four ribonucleoside triphosphates as substrates. In Chlamydia felis (strain Fe/C-56) (Chlamydophila felis), this protein is DNA-directed RNA polymerase subunit alpha.